Reading from the N-terminus, the 276-residue chain is Elongation factor Ts (276 aa).

Residues 79–82 are involved in Mg(2+) ion dislocation from EF-Tu; that stretch reads TDFV.

Belongs to the EF-Ts family.

It localises to the cytoplasm. Associates with the EF-Tu.GDP complex and induces the exchange of GDP to GTP. It remains bound to the aminoacyl-tRNA.EF-Tu.GTP complex up to the GTP hydrolysis stage on the ribosome. In Buchnera aphidicola subsp. Cinara cedri (strain Cc), this protein is Elongation factor Ts.